The following is a 101-amino-acid chain: Small ribosomal subunit protein uS14 (101 aa).

This sequence belongs to the universal ribosomal protein uS14 family. Part of the 30S ribosomal subunit. Contacts proteins S3 and S10.

Its function is as follows. Binds 16S rRNA, required for the assembly of 30S particles and may also be responsible for determining the conformation of the 16S rRNA at the A site. The chain is Small ribosomal subunit protein uS14 from Salmonella paratyphi A (strain ATCC 9150 / SARB42).